The sequence spans 1685 residues: PHD and RING finger domain-containing protein 1 (1685 aa).

Positions 1 to 82 are disordered; the sequence is MDDDNLDELV…GSEDSEDGIE (82 aa). A compositionally biased stretch (acidic residues) spans 41–81; it reads DSEDDTGSEQDDDTDGEETEGLSEEEDPEDRSGSEDSEDGI. The segment at 109–150 adopts an RING-type; degenerate zinc-finger fold; that stretch reads CPICLNAFRDQAVGTPETCAHYFCLDCIIEWSRNANSCPVDR. The segment at 188–238 adopts a PHD-type zinc-finger fold; it reads PTFCEVCGRSDREDRLLLCDGCDAGYHMECLDPPLQEVPVDEWFCPECAVP. 5 disordered regions span residues 333-390, 449-483, 537-590, 606-777, and 809-860; these read PLTP…KLKN, DSNG…VARP, SAKR…GLSC, TPVR…GSSF, and KVQR…LLPS. Phosphothreonine is present on threonine 335. Composition is skewed to basic residues over residues 339 to 364 and 372 to 387; these read PAKR…RSSV and RAKK…KGRK. Phosphoserine is present on residues serine 450 and serine 460. Polar residues-rich tracts occupy residues 606 to 625 and 637 to 662; these read TPVR…GNLS and SPRL…NFPS. Over residues 671–682 the composition is skewed to basic and acidic residues; the sequence is QKTDPRRPDFSK. Composition is skewed to polar residues over residues 694-709 and 737-751; these read SNST…QTVE and SSRG…TSGS. 9 positions are modified to phosphoserine: serine 817, serine 848, serine 849, serine 867, serine 870, serine 922, serine 948, serine 984, and serine 1002. Low complexity predominate over residues 835-860; sequence PFDPTGSDSSPPSSSPESLGSGLLPS. 3 disordered regions span residues 892 to 1229, 1290 to 1355, and 1369 to 1390; these read GTEM…VSEV, QLDD…APSD, and TTLS…SGRG. Residues 922–934 are compositionally biased toward acidic residues; the sequence is SDLEQEGLGEIEP. Over residues 1001-1010 the composition is skewed to low complexity; that stretch reads SSRSRSTSSS. Composition is skewed to basic residues over residues 1011–1031 and 1054–1064; these read RSRK…RTRS and KRHRAKTKSRR. The span at 1065–1075 shows a compositional bias: basic and acidic residues; the sequence is SSSDRASSQDR. 2 stretches are compositionally biased toward basic residues: residues 1089–1102 and 1117–1129; these read GPWG…KSRS and SRRR…GSRS. Basic and acidic residues-rich tracts occupy residues 1130-1143 and 1151-1165; these read RGRD…LERD and RSRE…MTRS. Residues serine 1135 and serine 1139 each carry the phosphoserine modification. Over residues 1181-1191 the composition is skewed to basic residues; that stretch reads RTRRPHSREKH. The span at 1192-1201 shows a compositional bias: basic and acidic residues; that stretch reads PHSPEKKGAV. Serine 1205 bears the Phosphoserine mark. Over residues 1292 to 1305 the composition is skewed to low complexity; the sequence is DDMSSPPSPESTDS. Serine 1372 and serine 1383 each carry phosphoserine. Phosphothreonine is present on threonine 1416. Disordered stretches follow at residues 1421 to 1448, 1466 to 1501, and 1569 to 1591; these read EAEA…EGDW, LPPP…VGTL, and LAVP…AEKT. A compositionally biased stretch (basic and acidic residues) spans 1577–1591; sequence SEERTATPKTAAEKT. Positions 1589-1615 form a coiled coil; the sequence is EKTKKEEYMKKLHMQERAVEEVKLAIK.

As to quaternary structure, interacts with POLR2A (via the C-terminal domain).

This Rattus norvegicus (Rat) protein is PHD and RING finger domain-containing protein 1.